The chain runs to 532 residues: Cytochrome P450 12b1, mitochondrial (532 aa).

Cys480 contacts heme.

This sequence belongs to the cytochrome P450 family. The cofactor is heme.

The protein resides in the mitochondrion. Its function is as follows. Probably involved in steroid hormones biosynthesis. The polypeptide is Cytochrome P450 12b1, mitochondrial (Cyp12b1) (Drosophila acanthoptera (Fruit fly)).